Consider the following 483-residue polypeptide: MKIAYVSYEVSPFAKAGGLADVAGALPKYIKNAGEDIYVVMPFHKNIENNYDISKFEVVKTGLIPDSHTHKSPFSVYKSYLEGSSVVIYFIKTDSLYDSKNIYDEENIFLKTSYFCDSALKTIKECEPDTNVININDWHTSLIPVYLKTHYLQDNILKKIATILTIHNIGYQGLFNPEVLNQAGLPNYLFNMNALEYYGKVNVLKGGILFSNIINTVSPTYAKEIQSEEYGYGLEGILKVRSEDLFGILNGIDYSIYDPLKDPHIFHPIESYEDKLKNKTSLQEYLGLTKDENITLISFIGRLFEQKGIDLISKIMDLLLLNDIQFVLLGTGDKKYEEYFVTLTKLYPKKISINITFDVDLAQKIYAGSDIFLMPSKYEPCGLGQMYSMRYGTVPVVRYTGGLKDTVSEYNPKDKKGTGFGFHEYKEADLLYTLMKAIYFHQKRKDDWTNIFENCMKEDFSYEKTAKKYIELYKIALDKKRGY.

Residue Lys-15 coordinates ADP-alpha-D-glucose.

This sequence belongs to the glycosyltransferase 1 family. Bacterial/plant glycogen synthase subfamily.

The enzyme catalyses [(1-&gt;4)-alpha-D-glucosyl](n) + ADP-alpha-D-glucose = [(1-&gt;4)-alpha-D-glucosyl](n+1) + ADP + H(+). The protein operates within glycan biosynthesis; glycogen biosynthesis. Its function is as follows. Synthesizes alpha-1,4-glucan chains using ADP-glucose. The sequence is that of Glycogen synthase from Petrotoga mobilis (strain DSM 10674 / SJ95).